The sequence spans 328 residues: DNA-directed RNA polymerase subunit alpha (328 aa).

The tract at residues 1–234 (MQGSVTEFLK…EQLDAFVDLR (234 aa)) is alpha N-terminal domain (alpha-NTD). Positions 248-328 (FDPILLRPVD…NWPPASIAED (81 aa)) are alpha C-terminal domain (alpha-CTD).

It belongs to the RNA polymerase alpha chain family. In terms of assembly, homodimer. The RNAP catalytic core consists of 2 alpha, 1 beta, 1 beta' and 1 omega subunit. When a sigma factor is associated with the core the holoenzyme is formed, which can initiate transcription.

It catalyses the reaction RNA(n) + a ribonucleoside 5'-triphosphate = RNA(n+1) + diphosphate. Functionally, DNA-dependent RNA polymerase catalyzes the transcription of DNA into RNA using the four ribonucleoside triphosphates as substrates. The sequence is that of DNA-directed RNA polymerase subunit alpha from Haemophilus influenzae (strain PittEE).